A 160-amino-acid polypeptide reads, in one-letter code: Small ribosomal subunit protein uS9 (160 aa).

The protein belongs to the universal ribosomal protein uS9 family.

The chain is Small ribosomal subunit protein uS9 from Bradyrhizobium sp. (strain ORS 278).